A 149-amino-acid polypeptide reads, in one-letter code: Small ribosomal subunit protein uS19 (149 aa).

Belongs to the universal ribosomal protein uS19 family.

Protein S19 forms a complex with S13 that binds strongly to the 16S ribosomal RNA. This chain is Small ribosomal subunit protein uS19, found in Methanopyrus kandleri (strain AV19 / DSM 6324 / JCM 9639 / NBRC 100938).